We begin with the raw amino-acid sequence, 119 residues long: Large ribosomal subunit protein bL20 (119 aa).

It belongs to the bacterial ribosomal protein bL20 family.

Functionally, binds directly to 23S ribosomal RNA and is necessary for the in vitro assembly process of the 50S ribosomal subunit. It is not involved in the protein synthesizing functions of that subunit. The polypeptide is Large ribosomal subunit protein bL20 (Clostridium botulinum (strain ATCC 19397 / Type A)).